We begin with the raw amino-acid sequence, 242 residues long: Biosynthetic peptidoglycan transglycosylase (242 aa).

A helical transmembrane segment spans residues 19–39 (LMVVLAIFWGGGIALFSVAPV).

The protein belongs to the glycosyltransferase 51 family.

It localises to the cell inner membrane. The enzyme catalyses [GlcNAc-(1-&gt;4)-Mur2Ac(oyl-L-Ala-gamma-D-Glu-L-Lys-D-Ala-D-Ala)](n)-di-trans,octa-cis-undecaprenyl diphosphate + beta-D-GlcNAc-(1-&gt;4)-Mur2Ac(oyl-L-Ala-gamma-D-Glu-L-Lys-D-Ala-D-Ala)-di-trans,octa-cis-undecaprenyl diphosphate = [GlcNAc-(1-&gt;4)-Mur2Ac(oyl-L-Ala-gamma-D-Glu-L-Lys-D-Ala-D-Ala)](n+1)-di-trans,octa-cis-undecaprenyl diphosphate + di-trans,octa-cis-undecaprenyl diphosphate + H(+). Its pathway is cell wall biogenesis; peptidoglycan biosynthesis. In terms of biological role, peptidoglycan polymerase that catalyzes glycan chain elongation from lipid-linked precursors. The chain is Biosynthetic peptidoglycan transglycosylase from Escherichia coli O81 (strain ED1a).